A 279-amino-acid chain; its full sequence is uncharacterized protein (279 aa).

Positions 1 to 87 (MRVNGRNLTN…DEYIYLGRQI (87 aa)) constitute a Reverse transcriptase domain.

This is an uncharacterized protein from Caenorhabditis elegans.